Here is an 82-residue protein sequence, read N- to C-terminus: Delta-ctenitoxin-Pn1a (82 aa).

An N-terminal signal peptide occupies residues methionine 1–alanine 16. The propeptide occupies serine 17 to arginine 34. 5 cysteine pairs are disulfide-bonded: cysteine 35-cysteine 49, cysteine 42-cysteine 55, cysteine 46-cysteine 82, cysteine 48-cysteine 65, and cysteine 57-cysteine 63.

This sequence belongs to the neurotoxin 03 (Tx2) family. 05 subfamily. In terms of tissue distribution, expressed by the venom gland.

It is found in the secreted. Functionally, this neurotoxin binds at site 3 of insect voltage-activated sodium channels (Nav) and prolongs evoked axonal action potentials by a slowing down of sodium current inactivation. The toxin also inhibits glutamate uptake from rat brain synaptosomes. It reversibly inhibits the N-methyl-D-aspartate (NMDA)-subtype of ionotropic glutamate receptor (GRIN). In addition, the toxin shows antinociceptive effect in all rat pain models tested (inflammatory, neuropathic and nociceptive). The antinociceptive effect is partially blocked when selective antagonists of both mu- and delta-opioid receptors are administered, revealing that the antinociceptive effect of the toxin involves both opioid and cannabinoid endogenous systems. In vivo, it is highly toxic to house fly (Musca domestica), toxic to cockroach, but has no effect when intracerebroventricularly injected into mice. The protein is Delta-ctenitoxin-Pn1a of Phoneutria nigriventer (Brazilian armed spider).